The chain runs to 115 residues: Holo-[acyl-carrier-protein] synthase (115 aa).

Positions 5 and 50 each coordinate Mg(2+).

Belongs to the P-Pant transferase superfamily. AcpS family. Mg(2+) serves as cofactor.

The protein resides in the cytoplasm. The enzyme catalyses apo-[ACP] + CoA = holo-[ACP] + adenosine 3',5'-bisphosphate + H(+). Transfers the 4'-phosphopantetheine moiety from coenzyme A to a Ser of acyl-carrier-protein. This Campylobacter fetus subsp. fetus (strain 82-40) protein is Holo-[acyl-carrier-protein] synthase.